The sequence spans 160 residues: Cyclic pyranopterin monophosphate synthase (160 aa).

Substrate contacts are provided by residues 75-77 and 113-114; these read LCH and ME. Residue Asp-128 is part of the active site.

The protein belongs to the MoaC family. In terms of assembly, homohexamer; trimer of dimers.

It carries out the reaction (8S)-3',8-cyclo-7,8-dihydroguanosine 5'-triphosphate = cyclic pyranopterin phosphate + diphosphate. Its pathway is cofactor biosynthesis; molybdopterin biosynthesis. Its function is as follows. Catalyzes the conversion of (8S)-3',8-cyclo-7,8-dihydroguanosine 5'-triphosphate to cyclic pyranopterin monophosphate (cPMP). The protein is Cyclic pyranopterin monophosphate synthase of Haemophilus influenzae (strain PittEE).